The sequence spans 132 residues: DNA-binding protein inhibitor ID-2 (132 aa).

The region spanning Ala23–Leu75 is the bHLH domain. The Nuclear export signal motif lies at Leu105–Leu114.

As to quaternary structure, heterodimer with other HLH proteins.

The protein localises to the cytoplasm. It is found in the nucleus. Its function is as follows. Transcriptional regulator (lacking a basic DNA binding domain) which negatively regulates the basic helix-loop-helix (bHLH) transcription factors by forming heterodimers and inhibiting their DNA binding and transcriptional activity. Inhibits the activity of both neurogenic (neurod1/neuroD) and myogenic (myod1/myoD) bHLH factors. May play a role in the regulation of the circadian clock. This chain is DNA-binding protein inhibitor ID-2, found in Xenopus tropicalis (Western clawed frog).